The chain runs to 338 residues: Ferrochelatase (338 aa).

Positions 202 and 283 each coordinate Fe cation.

This sequence belongs to the ferrochelatase family.

The protein resides in the cytoplasm. The enzyme catalyses heme b + 2 H(+) = protoporphyrin IX + Fe(2+). Its pathway is porphyrin-containing compound metabolism; protoheme biosynthesis; protoheme from protoporphyrin-IX: step 1/1. Catalyzes the ferrous insertion into protoporphyrin IX. In Acinetobacter baumannii (strain AB307-0294), this protein is Ferrochelatase.